Here is a 486-residue protein sequence, read N- to C-terminus: Cysteine--tRNA ligase (486 aa).

Residue Cys29 coordinates Zn(2+). The 'HIGH' region motif lies at Val31–His41. Zn(2+)-binding residues include Cys214, His239, and Glu243. Residues Lys271 to Ser275 carry the 'KMSKS' region motif. Position 274 (Lys274) interacts with ATP.

The protein belongs to the class-I aminoacyl-tRNA synthetase family. In terms of assembly, monomer. The cofactor is Zn(2+).

It localises to the cytoplasm. The catalysed reaction is tRNA(Cys) + L-cysteine + ATP = L-cysteinyl-tRNA(Cys) + AMP + diphosphate. This Trichormus variabilis (strain ATCC 29413 / PCC 7937) (Anabaena variabilis) protein is Cysteine--tRNA ligase.